A 446-amino-acid chain; its full sequence is Probable D-serine dehydratase (446 aa).

Residue lysine 113 is modified to N6-(pyridoxal phosphate)lysine.

It belongs to the serine/threonine dehydratase family. DsdA subfamily. Pyridoxal 5'-phosphate is required as a cofactor.

It catalyses the reaction D-serine = pyruvate + NH4(+). The sequence is that of Probable D-serine dehydratase from Burkholderia lata (strain ATCC 17760 / DSM 23089 / LMG 22485 / NCIMB 9086 / R18194 / 383).